The sequence spans 1876 residues: MTGSISGEADLRHWLIDYLVTNIGCTPDEVDPDLSLADLGVSSRDAVVLSGELSELLGRTVSPIDFWEHPTINALAAYLAAPEPSPDSDAAVKRGARNSLDEPIAVVGMGCRFPGGISCPEALWDFLCERRSSISQVPPQRWQPFEGGPPEVAAALARTTRWGSFLPDIDAFDAEFFEISPSEADKMDPQQRLLLEVAWEALEHAGIPPGTLRRSATGVFAGACLSEYGAMASADLSQVDGWSNSGGAMSIIANRLSYFLDLRGPSVAVDTACSSSLVAIHLACQSLRTQDCHLAIAAGVNLLLSPAVFRGFDQVGALSPTGQCRAFDATADGFVRGEGAGVVVLKRLTDAQRDGDRVLAVICGSAVNQDGRSNGLMAPNPAAQMAVLRAAYTNAGMQPSEVDYVEAHGTGTLLGDPIEARALGTVLGRGRPEDSPLLIGSVKTNLGHTEAAAGIAGFIKTVLAVQHGQIPPNQHFETANPHIPFTDLRMKVVDTQTEWPATGHPRRAGVSSFGFGGTNAHVVIEQGQEVRPAPGQGLSPAVSTLVVAGKTMQRVSATAGMLADWMEGPGADVALADVAHTLNHHRSRQPKFGTVVARDRTQAIAGLRALAAGQHAPGVVNPADGSPGPGTVFVYSGRGSQWAGMGRQLLADEPAFAAAVAELEPVFVEQAGFSLHDVLANGEELVGIEQIQLGLIGMQLALTELWCSYGVRPDLVIGHSMGEVAAAVVAGALTPAEGLRVTATRSRLMAPLSGQGGMALLELDAPTTEALIADFPQVTLGIYNSPRQTVIAGPTEQIDELIARVRAQNRFASRVNIEVAPHNPAMDALQPAMRSELADLTPRTPTIGIISTTYADLHTQPVFDAEHWATNMRNPVRFQQAIASAGSGADGAYHTFIEISAHPLLTQAIIDTLHSAQPGARYTSLGTLQRDTDDVVTFRTNLNKAHTIHPPHTPHPPEPHPPIPTTPWQHTRHWITTKYPAGSVGSAPRAGTLLGQHTTVATVSASPPSHLWQARLAPDAKPYQGGHRFHQVEVVPASVVLHTILSAATELGYSALSEVRFEQPIFADRPRLIQVVADNRAISLASSPAAGTPSDRWTRHVTAQLSSSPSDSASSLNEHHRANGQPPERAHRDLIPDLAELLAMRGIDGLPFSWTVASWTQHSSNLTVAIDLPEALPEGSTGPLLDAAVHLAALSDVADSRLYVPASIEQISLGDVVTGPRSSVTLNRTAHDDDGITVDVTVAAHGEVPSLSMRSLRYRALDFGLDVGRAQPPASTGPVEAYCDATNFVHTIDWQPQTVPDATHPGAEQVTHPGPVAIIGDDGAALCETLEGAGYQPAVMSDGVSQARYVVYVADSDPAGADETDVDFAVRICTEITGLVRTLAERDADKPAALWILTRGVHESVAPSALRQSFLWGLAGVIAAEHPELWGGLVDLAINDDLGEFGPALAELLAKPSKSILVRRDGVVLAPALAPVRGEPARKSLQCRPDAAYLITGGLGALGLLMADWLADRGAHRLVLTGRTPLPPRRDWQLDTLDTELRRRIDAIRALEMRGVTVEAVAADVGCREDVQALLAARDRDGAAPIRGIIHAAGITNDQLVTSMTGDAVRQVMWPKIGGSQVLHDAFPPGSVDFFYLTASAAGIFGIPGQGSYAAANSYLDALARARRQQGCHTMSLDWVAWRGLGLAADAQLVSEELARMGSRDITPSEAFTAWEFVDGYDVAQAVVVPMPAPAGADGSGANAYLLPARNWSVMAATEVRSELEQGLRRIIAAELRVPEKELDTDRPFAELGLNSLMAMAIRREAEQFVGIELSATMLFNHPTVKSLASYLAKRVAPHDVSQDNQISALSSSAGSVLDSLFDRIESAPPEAERSV.

N-acetylthreonine is present on Thr-2. Residues 9–83 form the Carrier 1 domain; that stretch reads ADLRHWLIDY…ALAAYLAAPE (75 aa). Ser-43 carries the O-(pantetheine 4'-phosphoryl)serine modification. Residues 101 to 526 enclose the Ketosynthase family 3 (KS3) domain; sequence DEPIAVVGMG…GTNAHVVIEQ (426 aa). Active-site for beta-ketoacyl synthase activity residues include Cys-273, His-408, and His-448. Residues 626–950 form an acyltransferase region; that stretch reads SPGPGTVFVY…NLNKAHTIHP (325 aa). Ser-720 serves as the catalytic For malonyltransferase activity. Residues 997-1112 are N-terminal hotdog fold; that stretch reads HTTVATVSAS…AQLSSSPSDS (116 aa). Residues 997 to 1267 enclose the PKS/mFAS DH domain; that stretch reads HTTVATVSAS…YRALDFGLDV (271 aa). The active-site Proton acceptor; for dehydratase activity is the His-1027. The tract at residues 1102–1130 is disordered; the sequence is TAQLSSSPSDSASSLNEHHRANGQPPERA. Residues 1106 to 1115 show a composition bias toward low complexity; sequence SSSPSDSASS. The interval 1130 to 1267 is C-terminal hotdog fold; that stretch reads AHRDLIPDLA…YRALDFGLDV (138 aa). Asp-1186 acts as the Proton donor; for dehydratase activity in catalysis. 1491-1551 contacts NADP(+); it reads AAYLITGGLG…RRRIDAIRAL (61 aa). A beta-ketoacyl reductase region spans residues 1491-1728; it reads AAYLITGGLG…DGYDVAQAVV (238 aa). Residues 1759–1836 form the Carrier 2 domain; sequence EVRSELEQGL…SLASYLAKRV (78 aa). O-(pantetheine 4'-phosphoryl)serine is present on Ser-1796.

NADP(+) serves as cofactor. Pantetheine 4'-phosphate is required as a cofactor.

It catalyses the reaction icosanoyl-[(phenol)carboxyphthiodiolenone synthase] + 2 (S)-methylmalonyl-CoA + 3 malonyl-CoA + 5 NADPH + 10 H(+) = C32-carboxyphthiodiolenone-[(phenol)carboxyphthiodiolenone synthase] + 5 CO2 + 5 NADP(+) + 5 CoA + 2 H2O. The enzyme catalyses docosanoyl-[(phenol)carboxyphthiodiolenone synthase] + 2 (S)-methylmalonyl-CoA + 3 malonyl-CoA + 5 NADPH + 10 H(+) = C34-carboxyphthiodiolenone-[(phenol)carboxyphthiodiolenone synthase] + 5 CO2 + 5 NADP(+) + 5 CoA + 2 H2O. The catalysed reaction is 17-(4-hydroxyphenyl)heptadecanoyl-[(phenol)carboxyphthiodiolenone synthase] + 2 (S)-methylmalonyl-CoA + 3 malonyl-CoA + 5 NADPH + 10 H(+) = C35-(phenol)carboxyphthiodiolenone-[(phenol)carboxyphthiodiolenone synthase] + 5 CO2 + 5 NADP(+) + 5 CoA + 2 H2O. It carries out the reaction 19-(4-hydroxyphenyl)nonadecanoyl-[(phenol)carboxyphthiodiolenone synthase] + 2 (S)-methylmalonyl-CoA + 3 malonyl-CoA + 5 NADPH + 10 H(+) = C37-(phenol)carboxyphthiodiolenone-[(phenol)carboxyphthiodiolenone synthase] + 5 CO2 + 5 NADP(+) + 5 CoA + 2 H2O. The protein operates within lipid metabolism; fatty acid biosynthesis. Part of the PpsABCDE complex involved in the biosynthesis of the lipid core common to phthiocerols and phenolphthiocerols by successive additions of malonyl-CoA or methylmalonyl-CoA extender units. PpsA can accept as substrate the activated forms of either icosanoyl (C20), docosanoyl (C22) or lignoceroyl (C24) groups from FadD26, or a (4-hydroxyphenyl)-C17 or (4-hydroxyphenyl)-C19 fatty acyl from FadD29. PpsA initiates the biosynthesis and extends its substrate using a malonyl-CoA extender unit. The PpsB and PpsC proteins add the second and third malonyl-CoA extender units. PpsD adds an (R)-methylmalonyl unit and PpsE adds a second (R)-methylmalonyl unit. The incorporation of the methylmalonyl units results in formation of two branched methyl groups in the elongated product. The protein is Phenolphthiocerol/phthiocerol polyketide synthase subunit A (ppsA) of Mycobacterium tuberculosis (strain ATCC 25618 / H37Rv).